The sequence spans 783 residues: RNA exonuclease 5 (783 aa).

The Exonuclease domain occupies 230–378; sequence LFGLDCEMCL…EDARTTLELA (149 aa). RRM domains lie at 503–577 and 598–677; these read STVY…RPVT and GTIY…RHLH.

In Bos taurus (Bovine), this protein is RNA exonuclease 5 (REXO5).